We begin with the raw amino-acid sequence, 1109 residues long: Carbamoyl phosphate synthase large chain (1109 aa).

Residues 1-402 are carboxyphosphate synthetic domain; the sequence is MPRRTDLTSV…ALQKAMRSID (402 aa). 12 residues coordinate ATP: R129, R169, G175, G176, E208, I210, E215, G241, V242, H243, Q285, and E299. Residues 133 to 328 form the ATP-grasp 1 domain; that stretch reads KGVVERCGAE…IAKIAARLAV (196 aa). Residues Q285, E299, and N301 each coordinate Mg(2+). Positions 285, 299, and 301 each coordinate Mn(2+). The segment at 403-548 is oligomerization domain; sequence KAGSTFHWRG…YHYSSYDAET (146 aa). Residues 549-956 form a carbamoyl phosphate synthetic domain region; the sequence is EVQPRDRPAV…AFAKSQAAAY (408 aa). Positions 678 to 876 constitute an ATP-grasp 2 domain; it reads GEVLVAAGLP…LAKAASLLMA (199 aa). Residues R714, R760, L762, E767, G792, I793, H794, S795, Q835, and E847 each contribute to the ATP site. The Mg(2+) site is built by Q835, E847, and N849. Residues Q835, E847, and N849 each contribute to the Mn(2+) site. An MGS-like domain is found at 957-1102; the sequence is GGLPTSGRVF…QEHDAARAAR (146 aa). Residues 957 to 1109 are allosteric domain; that stretch reads GGLPTSGRVF…AARETEGVHA (153 aa).

The protein belongs to the CarB family. In terms of assembly, composed of two chains; the small (or glutamine) chain promotes the hydrolysis of glutamine to ammonia, which is used by the large (or ammonia) chain to synthesize carbamoyl phosphate. Tetramer of heterodimers (alpha,beta)4. Mg(2+) serves as cofactor. Mn(2+) is required as a cofactor.

The enzyme catalyses hydrogencarbonate + L-glutamine + 2 ATP + H2O = carbamoyl phosphate + L-glutamate + 2 ADP + phosphate + 2 H(+). It carries out the reaction hydrogencarbonate + NH4(+) + 2 ATP = carbamoyl phosphate + 2 ADP + phosphate + 2 H(+). It participates in amino-acid biosynthesis; L-arginine biosynthesis; carbamoyl phosphate from bicarbonate: step 1/1. Its pathway is pyrimidine metabolism; UMP biosynthesis via de novo pathway; (S)-dihydroorotate from bicarbonate: step 1/3. Its function is as follows. Large subunit of the glutamine-dependent carbamoyl phosphate synthetase (CPSase). CPSase catalyzes the formation of carbamoyl phosphate from the ammonia moiety of glutamine, carbonate, and phosphate donated by ATP, constituting the first step of 2 biosynthetic pathways, one leading to arginine and/or urea and the other to pyrimidine nucleotides. The large subunit (synthetase) binds the substrates ammonia (free or transferred from glutamine from the small subunit), hydrogencarbonate and ATP and carries out an ATP-coupled ligase reaction, activating hydrogencarbonate by forming carboxy phosphate which reacts with ammonia to form carbamoyl phosphate. The polypeptide is Carbamoyl phosphate synthase large chain (Beutenbergia cavernae (strain ATCC BAA-8 / DSM 12333 / CCUG 43141 / JCM 11478 / NBRC 16432 / NCIMB 13614 / HKI 0122)).